Here is a 308-residue protein sequence, read N- to C-terminus: MKHYEVEIRDAKTREKLCFLDKVEPQATISEIKTLFTKTHPQWYPARQSLRLDPKGKSLKDEDVLQKLPVGTTATLYFRDLGAQISWVTVFLTEYAGPLFIYLLFYFRVPFIYGRKYDFTSSRHTVVHLACMCHSFHYIKRLLETLFVHRFSHGTMPLRNIFKNCTYYWGFAAWMAYYINHPLYTPPTYGVQQVKLALAIFVICQLGNFSIHMALRDLRPAGSKTRKIPYPTKNPFTWLFLLVSCPNYTYEVGSWIGFAIMTQCVPVALFSLVGFTQMTIWAKGKHRSYLKEFRDYPPLRMPIIPFLL.

At 1 to 86 (MKHYEVEIRD…YFRDLGAQIS (86 aa)) the chain is on the cytoplasmic side. The residue at position 22 (lysine 22) is an N6-acetyllysine. Serine 58 carries the phosphoserine modification. Position 60 is an N6-acetyllysine (lysine 60). The chain crosses the membrane as a helical span at residues 87-106 (WVTVFLTEYAGPLFIYLLFY). The Lumenal segment spans residues 107–124 (FRVPFIYGRKYDFTSSRH). Residues 125–147 (TVVHLACMCHSFHYIKRLLETLF) form a helical membrane-spanning segment. The Cytoplasmic portion of the chain corresponds to 148-158 (VHRFSHGTMPL). Residues 159–180 (RNIFKNCTYYWGFAAWMAYYIN) traverse the membrane as a helical segment. The Lumenal segment spans residues 181–189 (HPLYTPPTY). A helical membrane pass occupies residues 190 to 216 (GVQQVKLALAIFVICQLGNFSIHMALR). Over 217–245 (DLRPAGSKTRKIPYPTKNPFTWLFLLVSC) the chain is Cytoplasmic. A helical transmembrane segment spans residues 246 to 262 (PNYTYEVGSWIGFAIMT). Topologically, residues 263–264 (QC) are lumenal. Residues 265-292 (VPVALFSLVGFTQMTIWAKGKHRSYLKE) form a helical membrane-spanning segment. At 293-308 (FRDYPPLRMPIIPFLL) the chain is on the cytoplasmic side.

The protein belongs to the steroid 5-alpha reductase family. In terms of assembly, interacts with ELOVL1 and LASS2. Glycosylated. As to expression, expressed at high levels in brain and is also found at lower levels in several other tissues.

It is found in the endoplasmic reticulum membrane. It catalyses the reaction a very-long-chain 2,3-saturated fatty acyl-CoA + NADP(+) = a very-long-chain (2E)-enoyl-CoA + NADPH + H(+). The catalysed reaction is octadecanoyl-CoA + NADP(+) = (2E)-octadecenoyl-CoA + NADPH + H(+). The enzyme catalyses (2E,7Z,10Z,13Z,16Z)-docosapentaenoyl-CoA + NADPH + H(+) = (7Z,10Z,13Z,16Z)-docosatetraenoyl-CoA + NADP(+). It carries out the reaction (2E,7Z,10Z,13Z,16Z,19Z)-docosahexaenoyl-CoA + NADPH + H(+) = (7Z,10Z,13Z,16Z,19Z)-docosapentaenoyl-CoA + NADP(+). It catalyses the reaction (2E,8Z,11Z,14Z)-eicosatetraenoyl-CoA + NADPH + H(+) = (8Z,11Z,14Z)-eicosatrienoyl-CoA + NADP(+). The catalysed reaction is (2E)-hexadecenoyl-CoA + NADPH + H(+) = hexadecanoyl-CoA + NADP(+). The protein operates within lipid metabolism; fatty acid biosynthesis. Its pathway is lipid metabolism; sphingolipid metabolism. Its function is as follows. Involved in both the production of very long-chain fatty acids for sphingolipid synthesis and the degradation of the sphingosine moiety in sphingolipids through the sphingosine 1-phosphate metabolic pathway. Catalyzes the last of the four reactions of the long-chain fatty acids elongation cycle. This endoplasmic reticulum-bound enzymatic process, allows the addition of 2 carbons to the chain of long- and very long-chain fatty acids/VLCFAs per cycle. This enzyme reduces the trans-2,3-enoyl-CoA fatty acid intermediate to an acyl-CoA that can be further elongated by entering a new cycle of elongation. Thereby, it participates in the production of VLCFAs of different chain lengths that are involved in multiple biological processes as precursors of membrane lipids and lipid mediators. Catalyzes the saturation step of the sphingosine 1-phosphate metabolic pathway, the conversion of trans-2-hexadecenoyl-CoA to palmitoyl-CoA. The sequence is that of Very-long-chain enoyl-CoA reductase (Tecr) from Rattus norvegicus (Rat).